The chain runs to 331 residues: Terpene synthase 8 (331 aa).

The DDxx(x)D/E motif signature appears at 97–102; sequence DDFYLE. An NDxxSxxxD/E motif motif is present at residues 228-236; the sequence is NDIYSFNKE.

Belongs to the terpene synthase family.

Functionally, terpene synthase that converts its substrate farnesyl diphosphate (FPP) into several yet unidentified sesquiterpenes. This is Terpene synthase 8 from Dictyostelium purpureum (Slime mold).